Reading from the N-terminus, the 143-residue chain is Small ribosomal subunit protein uS9 (143 aa).

Positions 118–143 are disordered; that stretch reads DSRRTEPHKPNRSTKGPRAKRQKSYR. The segment covering 127-143 has biased composition (basic residues); sequence PNRSTKGPRAKRQKSYR.

The protein belongs to the universal ribosomal protein uS9 family.

This is Small ribosomal subunit protein uS9 from Thermococcus sibiricus (strain DSM 12597 / MM 739).